The chain runs to 435 residues: ATP-dependent RNA helicase DBP8 (435 aa).

A Q motif motif is present at residues 4 to 32; sequence SEFKSLGCSKWLVEALNAMKIVQPTAIQK. The Helicase ATP-binding domain occupies 35 to 211; the sequence is IPEILKGRDC…DAPQTEGKPP (177 aa). 48-55 contributes to the ATP binding site; sequence ANTGSGKT. The short motif at 157–160 is the DEAD box element; that stretch reads DEAD. A Helicase C-terminal domain is found at 244–391; that stretch reads YLYQILTSEK…FTDVGDTAVI (148 aa). Over residues 409-429 the composition is skewed to basic and acidic residues; the sequence is MDKEGFGERRKLQKRKNESKE. The interval 409–435 is disordered; the sequence is MDKEGFGERRKLQKRKNESKEKTHRRT.

Belongs to the DEAD box helicase family. DDX49/DBP8 subfamily.

It localises to the nucleus. The protein localises to the nucleolus. It catalyses the reaction ATP + H2O = ADP + phosphate + H(+). Its function is as follows. ATP-binding RNA helicase involved in 40S ribosomal subunit biogenesis and is required for the normal formation of 18S rRNAs through pre-rRNA processing at A0, A1 and A2 sites. Required for vegetative growth. This is ATP-dependent RNA helicase DBP8 (DBP8) from Kluyveromyces lactis (strain ATCC 8585 / CBS 2359 / DSM 70799 / NBRC 1267 / NRRL Y-1140 / WM37) (Yeast).